A 59-amino-acid polypeptide reads, in one-letter code: Large ribosomal subunit protein uL30 (59 aa).

The protein belongs to the universal ribosomal protein uL30 family. In terms of assembly, part of the 50S ribosomal subunit.

The chain is Large ribosomal subunit protein uL30 from Alkaliphilus oremlandii (strain OhILAs) (Clostridium oremlandii (strain OhILAs)).